The following is a 115-amino-acid chain: uncharacterized protein (115 aa).

This is an uncharacterized protein from Human herpesvirus 6A (strain Uganda-1102) (HHV-6 variant A).